We begin with the raw amino-acid sequence, 293 residues long: Shikimate dehydrogenase (NADP(+)) (293 aa).

Shikimate-binding positions include Ser-20–Thr-22 and Thr-72. Catalysis depends on Lys-76, which acts as the Proton acceptor. Shikimate-binding residues include Asn-97 and Asp-112. NADP(+) is bound by residues Gly-136–Ala-140 and Ile-230. Tyr-232 contributes to the shikimate binding site. Gly-253 serves as a coordination point for NADP(+).

Belongs to the shikimate dehydrogenase family. Homodimer.

It catalyses the reaction shikimate + NADP(+) = 3-dehydroshikimate + NADPH + H(+). The protein operates within metabolic intermediate biosynthesis; chorismate biosynthesis; chorismate from D-erythrose 4-phosphate and phosphoenolpyruvate: step 4/7. Its function is as follows. Involved in the biosynthesis of the chorismate, which leads to the biosynthesis of aromatic amino acids. Catalyzes the reversible NADPH linked reduction of 3-dehydroshikimate (DHSA) to yield shikimate (SA). The protein is Shikimate dehydrogenase (NADP(+)) of Arthrobacter sp. (strain FB24).